We begin with the raw amino-acid sequence, 216 residues long: Ribosomal RNA large subunit methyltransferase E (216 aa).

Glycine 71, tryptophan 73, aspartate 88, aspartate 104, and aspartate 126 together coordinate S-adenosyl-L-methionine. Lysine 166 acts as the Proton acceptor in catalysis.

Belongs to the class I-like SAM-binding methyltransferase superfamily. RNA methyltransferase RlmE family.

The protein localises to the cytoplasm. The catalysed reaction is uridine(2552) in 23S rRNA + S-adenosyl-L-methionine = 2'-O-methyluridine(2552) in 23S rRNA + S-adenosyl-L-homocysteine + H(+). Specifically methylates the uridine in position 2552 of 23S rRNA at the 2'-O position of the ribose in the fully assembled 50S ribosomal subunit. This is Ribosomal RNA large subunit methyltransferase E from Wolbachia sp. subsp. Brugia malayi (strain TRS).